Here is a 333-residue protein sequence, read N- to C-terminus: DNA-directed RNA polymerase subunit alpha (333 aa).

The tract at residues 1–233 is alpha N-terminal domain (alpha-NTD); that stretch reads MVQEKLRFST…DLFIPFLHAE (233 aa). Residues 266–333 are alpha C-terminal domain (alpha-CTD); that stretch reads KKEIALKSIF…DILKIQKYFT (68 aa).

This sequence belongs to the RNA polymerase alpha chain family. In plastids the minimal PEP RNA polymerase catalytic core is composed of four subunits: alpha, beta, beta', and beta''. When a (nuclear-encoded) sigma factor is associated with the core the holoenzyme is formed, which can initiate transcription.

Its subcellular location is the plastid. It is found in the chloroplast. The enzyme catalyses RNA(n) + a ribonucleoside 5'-triphosphate = RNA(n+1) + diphosphate. Its function is as follows. DNA-dependent RNA polymerase catalyzes the transcription of DNA into RNA using the four ribonucleoside triphosphates as substrates. The sequence is that of DNA-directed RNA polymerase subunit alpha from Phaseolus angularis (Azuki bean).